A 289-amino-acid polypeptide reads, in one-letter code: Rhodopsin (289 aa).

Topologically, residues 1-7 (YLVNPAA) are extracellular. Residues 8-32 (YAAPGAYMFLLILVGFPVNFLTLYV) traverse the membrane as a helical segment. Residues 33-44 (TLEHKKLRTPLN) are Cytoplasmic-facing. The chain crosses the membrane as a helical span at residues 45-67 (YILLNLAVADLFMVLGGFTTTMY). Topologically, residues 68 to 81 (TSMHGYFVLGRLGC) are extracellular. The cysteines at positions 81 and 158 are disulfide-linked. A helical membrane pass occupies residues 82-104 (NLEGFFATLGGEIALWSLVVLAI). Residues 105-107 (ERW) carry the 'Ionic lock' involved in activated form stabilization motif. Topologically, residues 105–123 (ERWIVVCKPISNFRFTEDH) are cytoplasmic. A helical membrane pass occupies residues 124–144 (AIMGLAFSWVMALTCAVPPLV). Residues 145–173 (GWSRYIPEGMQCSCGVDYYTRAEGFNNES) lie on the Extracellular side of the membrane. N171 is a glycosylation site (N-linked (GlcNAc...) asparagine). Residues 174-195 (FVIYMFIVHFLIPLSNNFFCYG) traverse the membrane as a helical segment. Residues 196–223 (RLLCAVKEAAAAQQESETTQRAEREVSR) lie on the Cytoplasmic side of the membrane. A helical membrane pass occupies residues 224–245 (MVVMMVVSFLMCWLPYASVAWY). The Extracellular portion of the chain corresponds to 246 to 257 (IFCNQGSEFGPI). A helical membrane pass occupies residues 258–279 (FMTLPAFFAKSSAIYNPLIYIC). K267 carries the N6-(retinylidene)lysine modification. Over 280–289 (MNKHVRHCMI) the chain is Cytoplasmic.

The protein belongs to the G-protein coupled receptor 1 family. Opsin subfamily. In terms of processing, phosphorylated on some or all of the serine and threonine residues present in the C-terminal region. Post-translationally, contains one covalently linked retinal chromophore.

It is found in the membrane. It localises to the cell projection. The protein resides in the cilium. Its subcellular location is the photoreceptor outer segment. In terms of biological role, photoreceptor required for image-forming vision at low light intensity. While most salt water fish species use retinal as chromophore, most freshwater fish use 3-dehydroretinal, or a mixture of retinal and 3-dehydroretinal. Light-induced isomerization of 11-cis to all-trans retinal triggers a conformational change that activates signaling via G-proteins. Subsequent receptor phosphorylation mediates displacement of the bound G-protein alpha subunit by arrestin and terminates signaling. The protein is Rhodopsin (rho) of Cottocomephorus grewingkii (Baikal yellowfin).